The chain runs to 193 residues: Xanthine phosphoribosyltransferase (193 aa).

The xanthine site is built by Leu20 and Thr27. 5-phospho-alpha-D-ribose 1-diphosphate is bound at residue 128 to 132 (ANGQA). A xanthine-binding site is contributed by Lys156.

It belongs to the purine/pyrimidine phosphoribosyltransferase family. Xpt subfamily. In terms of assembly, homodimer.

Its subcellular location is the cytoplasm. It catalyses the reaction XMP + diphosphate = xanthine + 5-phospho-alpha-D-ribose 1-diphosphate. Its pathway is purine metabolism; XMP biosynthesis via salvage pathway; XMP from xanthine: step 1/1. Converts the preformed base xanthine, a product of nucleic acid breakdown, to xanthosine 5'-monophosphate (XMP), so it can be reused for RNA or DNA synthesis. The chain is Xanthine phosphoribosyltransferase from Streptococcus gordonii (strain Challis / ATCC 35105 / BCRC 15272 / CH1 / DL1 / V288).